We begin with the raw amino-acid sequence, 254 residues long: Zinc import ATP-binding protein ZnuC (254 aa).

The ABC transporter domain occupies 5-219; the sequence is VELKEVCLSF…PEFARLFGRP (215 aa). 37–44 contributes to the ATP binding site; sequence GPNGAGKS. Positions 233 to 242 are enriched in basic and acidic residues; the sequence is CDGEHHHHEP. Residues 233 to 254 are disordered; the sequence is CDGEHHHHEPQVPVIRLPSRNQ.

This sequence belongs to the ABC transporter superfamily. Zinc importer (TC 3.A.1.15.5) family. The complex is composed of two ATP-binding proteins (ZnuC), two transmembrane proteins (ZnuB) and a solute-binding protein (ZnuA).

The protein resides in the cell inner membrane. It catalyses the reaction Zn(2+)(out) + ATP(in) + H2O(in) = Zn(2+)(in) + ADP(in) + phosphate(in) + H(+)(in). Part of the ABC transporter complex ZnuABC involved in zinc import. Responsible for energy coupling to the transport system. This Aeromonas hydrophila subsp. hydrophila (strain ATCC 7966 / DSM 30187 / BCRC 13018 / CCUG 14551 / JCM 1027 / KCTC 2358 / NCIMB 9240 / NCTC 8049) protein is Zinc import ATP-binding protein ZnuC.